The sequence spans 1155 residues: RHO1 GDP-GTP exchange protein 1 (1155 aa).

M1 is modified (N-acetylmethionine). The segment covering 100–143 has biased composition (polar residues); it reads NSSPQSFTGDQISPTNKKISINDSTRQDKGNSCTTTSSPSQKRS. The disordered stretch occupies residues 100–249; sequence NSSPQSFTGD…HSRSKSSPVS (150 aa). Phosphoserine occurs at positions 154 and 155. Positions 155 to 167 are enriched in low complexity; the sequence is SPSLLSFSKNSGS. A Phosphothreonine modification is found at T180. Residues 190–227 are compositionally biased toward low complexity; that stretch reads LHSSFNGKHSSSSTSSLFALESLKTQNRRSSNSSNHSS. A compositionally biased stretch (basic residues) spans 228 to 243; it reads QYRRHTNQHQRHHSRS. Position 433 is a phosphoserine (S433). In terms of domain architecture, DH spans 464-651; the sequence is KRQEAIYELF…KDLMKRIDRA (188 aa). Positions 842–1137 constitute a CNH domain; the sequence is TNRVNDVLIC…RMLKSYAKKI (296 aa).

Stimulates the exchange of RHO1 GDP-bound form into GTP-bound form. This Saccharomyces cerevisiae (strain ATCC 204508 / S288c) (Baker's yeast) protein is RHO1 GDP-GTP exchange protein 1 (ROM1).